The primary structure comprises 79 residues: UPF0175 protein APE_0890a.1 (79 aa).

This sequence belongs to the UPF0175 family.

This chain is UPF0175 protein APE_0890a.1, found in Aeropyrum pernix (strain ATCC 700893 / DSM 11879 / JCM 9820 / NBRC 100138 / K1).